Consider the following 535-residue polypeptide: Interferon lambda receptor 1 (535 aa).

Residues 1–20 (MWRADRWAPLLLFLLQSALG) form the signal peptide. The Extracellular segment spans residues 21–227 (RPRLAPPRNV…FLEAPGDKRA (207 aa)). The Fibronectin type-III domain maps to 26-121 (PPRNVTLFSQ…ESRYLEYLFD (96 aa)). 3 N-linked (GlcNAc...) asparagine glycosylation sites follow: Asn29, Asn36, and Asn52. 3 disulfides stabilise this stretch: Cys73/Cys81, Cys85/Cys149, and Cys194/Cys216. A glycan (N-linked (GlcNAc...) asparagine) is linked at Asn141. Residues 228–248 (VLAMPSLLLLLIAAVAAGVAW) traverse the membrane as a helical segment. Residues 249-535 (KIMKGNPWFQ…GRMLGDYLVR (287 aa)) lie on the Cytoplasmic side of the membrane. 2 disordered regions span residues 301–419 (NRPA…APCG) and 478–520 (VNNP…SSVQ). A compositionally biased stretch (acidic residues) spans 321–336 (STEDEDEDTDYDDDGD). Over residues 350–360 (EKPRVMEHSET) the composition is skewed to basic and acidic residues. Residues 376–396 (GSDGSSAWDSSDRSWSSTGDS) show a composition bias toward low complexity. Over residues 397-414 (SYKDEVGSSSCLDRKEPD) the composition is skewed to basic and acidic residues. A compositionally biased stretch (acidic residues) spans 482-503 (EGEEEQEDEEEEEEEEEEEDWE).

It belongs to the type II cytokine receptor family. In terms of assembly, heterodimer with IL10RB. Post-translationally, ubiquitinated by FBXO45-containing E3 ligase leading to proteasomal degradation.

The protein localises to the membrane. Its function is as follows. The IFNLR1/IL10RB dimer is a receptor for the cytokine ligands IFNL2 and IFNL3 and mediates their antiviral activity. The ligand/receptor complex stimulate the activation of the JAK/STAT signaling pathway leading to the expression of IFN-stimulated genes (ISG), which contribute to the antiviral state. Determines the cell type specificity of the lambda interferon action. Shows a more restricted pattern of expression in the epithelial tissues thereby limiting responses to lambda interferons primarily to epithelial cells of the respiratory, gastrointestinal, and reproductive tracts. Seems not to be essential for early virus-activated host defense in vaginal infection, but plays an important role in Toll-like receptor (TLR)-induced antiviral defense. Plays a significant role in the antiviral immune defense in the intestinal epithelium. The chain is Interferon lambda receptor 1 (Ifnlr1) from Mus musculus (Mouse).